Reading from the N-terminus, the 304-residue chain is Nucleotide-binding protein SH2124 (304 aa).

Gly19–Ser26 is an ATP binding site. A GTP-binding site is contributed by Asp70–Gly73.

It belongs to the RapZ-like family.

Its function is as follows. Displays ATPase and GTPase activities. The protein is Nucleotide-binding protein SH2124 of Staphylococcus haemolyticus (strain JCSC1435).